The sequence spans 857 residues: DNA mismatch repair protein MutS (857 aa).

608 to 615 contacts ATP; that stretch reads GPNMSGKS.

This sequence belongs to the DNA mismatch repair MutS family.

Its function is as follows. This protein is involved in the repair of mismatches in DNA. It is possible that it carries out the mismatch recognition step. This protein has a weak ATPase activity. This Lactobacillus johnsonii (strain CNCM I-12250 / La1 / NCC 533) protein is DNA mismatch repair protein MutS.